Reading from the N-terminus, the 254-residue chain is uncharacterized protein (254 aa).

A run of 5 helical transmembrane segments spans residues 33–53, 70–90, 92–112, 133–153, and 223–243; these read MLWV…LFFI, FNKL…LFKS, FALS…LNFM, FIIF…ILLI, and FLVF…PLIF.

It to M.jannaschii MJ0902.

Its subcellular location is the cell membrane. This is an uncharacterized protein from Methanocaldococcus jannaschii (strain ATCC 43067 / DSM 2661 / JAL-1 / JCM 10045 / NBRC 100440) (Methanococcus jannaschii).